The primary structure comprises 398 residues: Elongation factor Tu (398 aa).

A tr-type G domain is found at 10–207 (KIHLNVGTIG…ILDKNIPVPN (198 aa)). The G1 stretch occupies residues 19-26 (GHVDHGKT). Position 19–26 (19–26 (GHVDHGKT)) interacts with GTP. Thr26 lines the Mg(2+) pocket. The tract at residues 60–64 (GITIS) is G2. The segment at 81–84 (DCPG) is G3. Residues 81–85 (DCPGH) and 136–139 (NKAD) contribute to the GTP site. Residues 136-139 (NKAD) are G4. The tract at residues 174–176 (SAL) is G5.

The protein belongs to the TRAFAC class translation factor GTPase superfamily. Classic translation factor GTPase family. EF-Tu/EF-1A subfamily. In terms of assembly, monomer.

The protein localises to the cytoplasm. It catalyses the reaction GTP + H2O = GDP + phosphate + H(+). GTP hydrolase that promotes the GTP-dependent binding of aminoacyl-tRNA to the A-site of ribosomes during protein biosynthesis. The polypeptide is Elongation factor Tu (Carsonella ruddii (strain PV)).